The primary structure comprises 317 residues: Malate dehydrogenase (317 aa).

Residues 7-13 (GAAGGIG) and Asp-34 each bind NAD(+). Substrate-binding residues include Arg-81 and Arg-87. NAD(+) is bound by residues Asn-94 and 117-119 (VTN). Asn-119 and Arg-153 together coordinate substrate. His-177 acts as the Proton acceptor in catalysis. Met-231 contacts NAD(+).

This sequence belongs to the LDH/MDH superfamily. MDH type 1 family. In terms of assembly, homodimer.

The enzyme catalyses (S)-malate + NAD(+) = oxaloacetate + NADH + H(+). Its function is as follows. Catalyzes the reversible oxidation of malate to oxaloacetate. This chain is Malate dehydrogenase, found in Actinobacillus pleuropneumoniae serotype 5b (strain L20).